Here is a 343-residue protein sequence, read N- to C-terminus: Vancomycin C-type resistance protein VanC1 (343 aa).

An ATP-grasp domain is found at 134-336 (HQLADTMGIA…YEILVEQLIA (203 aa)). Position 164-219 (164-219 (IQDHGFPIFIKPNEAGSSKGITKVTDKTALQSALTTAFAYGSTVLIQKAIAGIEIG)) interacts with ATP. Residues aspartate 290, glutamate 303, and asparagine 305 each coordinate Mg(2+). Mn(2+) is bound by residues aspartate 290, glutamate 303, and asparagine 305.

Belongs to the D-alanine--D-alanine ligase family. It depends on Mg(2+) as a cofactor. Mn(2+) is required as a cofactor.

It is found in the cell membrane. It catalyses the reaction D-serine + D-alanine + ATP = D-alanyl-D-serine + ADP + phosphate + H(+). In terms of biological role, D-alanine--D-alanine ligase of altered specificity, which catalyzes synthesis of D-Ala-D-Ser; produces a peptidoglycan which does not terminate in D-alanine but in D-serine, thus probably reducing affinity for vancomycin. Together with VanT and VanXYC, required for vancomycin resistance in E.gallinarum strain BM4174. The chain is Vancomycin C-type resistance protein VanC1 from Enterococcus gallinarum.